A 235-amino-acid chain; its full sequence is MNMSTATTTHSCVPILVFPSYWASFSCCWWTRLVTPMCILLTPTQCEDDEDENLYDDPLLLNNPEAARSSNSKTTTTLGLVVHAAADGVALGAAASTSQTSVQLIVFVAIMLHKAPAAFGLVSFLMHAGLERNRIRKHLLVFSLAAPVMSMVTYLGLSKSSKEALSEVNATGMAMLFSAGTFLYVATVHVLPEVGGIGHSHKPDATGGRGLSRLEVAALVLGCLIPLILSVGHQH.

Asn2 carries N-linked (GlcNAc...) asparagine glycosylation. 4 helical membrane-spanning segments follow: residues 11 to 31 (SCVP…CWWT), 75 to 95 (TTTL…GAAA), 104 to 124 (LIVF…LVSF), and 138 to 158 (HLLV…LGLS). Asn169 carries N-linked (GlcNAc...) asparagine glycosylation. Transmembrane regions (helical) follow at residues 172–192 (GMAM…HVLP) and 214–234 (LEVA…VGHQ).

It belongs to the ZIP transporter (TC 2.A.5) family.

It is found in the golgi apparatus. The protein localises to the trans-Golgi network membrane. It localises to the cell membrane. Its subcellular location is the cytoplasm. The protein resides in the perinuclear region. It is found in the mitochondrion. The protein localises to the nucleus. It carries out the reaction Zn(2+)(in) = Zn(2+)(out). In terms of biological role, transports zinc ions across cell and organelle membranes into the cytoplasm and regulates intracellular zinc homeostasis. Participates in the zinc ions efflux out of the secretory compartments. Regulates intracellular zinc level, resulting in the enhancement of AKT1 and MAPK3/MAPK1 (Erk1/2) phosphorylation in response to the BCR activation. Also functions as a membrane androgen receptor that mediates, through a G protein, the non-classical androgen signaling pathway, characterized by the activation of MAPK3/MAPK1 (Erk1/2) and transcription factors CREB1 or ATF1. This pathway contributes to CLDN1 and CLDN5 expression and tight junction formation between adjacent Sertoli cells. Mediates androgen-induced vascular endothelial cell proliferation through activation of an inhibitory G protein leading to the AKT1 and MAPK3/MAPK1 (Erk1/2) activation which in turn modulate inhibition (phosphorylation) of GSK3B and CCND1 transcription. Moreover, has dual functions as a membrane-bound androgen receptor and as an androgen-dependent zinc transporter both of which are mediated through an inhibitory G protein (Gi) that mediates both MAP kinase and zinc signaling leading to the androgen-dependent apoptotic process. This Macaca fascicularis (Crab-eating macaque) protein is Zinc transporter ZIP9.